The sequence spans 89 residues: Large ribosomal subunit protein bL27 (89 aa).

The interval 1-20 (MAHKKAGGSSRNGRDSAGRR) is disordered.

Belongs to the bacterial ribosomal protein bL27 family.

This Zymomonas mobilis subsp. mobilis (strain ATCC 31821 / ZM4 / CP4) protein is Large ribosomal subunit protein bL27.